The chain runs to 624 residues: Chaperone protein HtpG (624 aa).

Residues 1–336 (MKGQETRGFQ…SSDLPLNVSR (336 aa)) form an a; substrate-binding region. Residues 337-552 (EILQDSTVTR…ADEMSTQMAK (216 aa)) are b. The segment at 553–624 (LFAAAGQKVP…IRRMNQLLVS (72 aa)) is c.

Belongs to the heat shock protein 90 family. In terms of assembly, homodimer.

The protein resides in the cytoplasm. Its function is as follows. Molecular chaperone. Has ATPase activity. The sequence is that of Chaperone protein HtpG from Escherichia coli O139:H28 (strain E24377A / ETEC).